The sequence spans 218 residues: Peptide methionine sulfoxide reductase MsrA (218 aa).

C54 is an active-site residue.

It belongs to the MsrA Met sulfoxide reductase family.

The catalysed reaction is L-methionyl-[protein] + [thioredoxin]-disulfide + H2O = L-methionyl-(S)-S-oxide-[protein] + [thioredoxin]-dithiol. It catalyses the reaction [thioredoxin]-disulfide + L-methionine + H2O = L-methionine (S)-S-oxide + [thioredoxin]-dithiol. Its function is as follows. Has an important function as a repair enzyme for proteins that have been inactivated by oxidation. Catalyzes the reversible oxidation-reduction of methionine sulfoxide in proteins to methionine. This Azorhizobium caulinodans (strain ATCC 43989 / DSM 5975 / JCM 20966 / LMG 6465 / NBRC 14845 / NCIMB 13405 / ORS 571) protein is Peptide methionine sulfoxide reductase MsrA.